A 394-amino-acid chain; its full sequence is Elongation factor Tu (394 aa).

In terms of domain architecture, tr-type G spans 10 to 204 (KPHVNVGTIG…ALDTYIPEPE (195 aa)). A G1 region spans residues 19-26 (GHVDHGKT). 19–26 (GHVDHGKT) lines the GTP pocket. Thr-26 contributes to the Mg(2+) binding site. Residues 60–64 (GITIN) are G2. The G3 stretch occupies residues 81-84 (DCPG). Residues 81-85 (DCPGH) and 136-139 (NKCD) contribute to the GTP site. The G4 stretch occupies residues 136–139 (NKCD). Residues 174-176 (SAL) form a G5 region.

It belongs to the TRAFAC class translation factor GTPase superfamily. Classic translation factor GTPase family. EF-Tu/EF-1A subfamily. In terms of assembly, monomer.

It is found in the cytoplasm. The catalysed reaction is GTP + H2O = GDP + phosphate + H(+). Functionally, GTP hydrolase that promotes the GTP-dependent binding of aminoacyl-tRNA to the A-site of ribosomes during protein biosynthesis. This chain is Elongation factor Tu, found in Shewanella sediminis (strain HAW-EB3).